The primary structure comprises 402 residues: Plasminogen activator inhibitor 1 (402 aa).

A signal peptide spans 1 to 23 (MRMSPVFACLALGLALIFGEGSA). N-linked (GlcNAc...) asparagine glycans are attached at residues Asn232, Asn288, and Asn352.

The protein belongs to the serpin family. Forms a heterodimer with TMPRSS7. Interacts with VTN. Binds LRP1B; binding is followed by internalization and degradation. Interacts with PPP1CB. In complex with PLAU/uPA, interacts with PLAUR/uPAR. Interacts with SORL1 and LRP1, either alone or in complex with PLAU; these interactions are abolished in the presence of LRPAP1/RAP. The ternary complex composed of PLAUR-PLAU-PAI1 also interacts with SORL1. Interacts with PLAT/tPA. Also interacts with SORL1, when complexed to PLAT/tPA. Vascular endothelial cells may be the primary site of synthesis of plasma PAI1.

It localises to the secreted. Its function is as follows. Serine protease inhibitor. Inhibits TMPRSS7. Is a primary inhibitor of tissue-type plasminogen activator (PLAT) and urokinase-type plasminogen activator (PLAU). As PLAT inhibitor, it is required for fibrinolysis down-regulation and is responsible for the controlled degradation of blood clots. As PLAU inhibitor, it is involved in the regulation of cell adhesion and spreading. Acts as a regulator of cell migration, independently of its role as protease inhibitor. It is required for stimulation of keratinocyte migration during cutaneous injury repair. It is involved in cellular and replicative senescence. Plays a role in alveolar type 2 cells senescence in the lung. Is involved in the regulation of cementogenic differentiation of periodontal ligament stem cells, and regulates odontoblast differentiation and dentin formation during odontogenesis. This chain is Plasminogen activator inhibitor 1 (SERPINE1), found in Bos taurus (Bovine).